We begin with the raw amino-acid sequence, 679 residues long: Stress-70 protein, mitochondrial (679 aa).

A mitochondrion-targeting transit peptide spans 1-46; that stretch reads MISASRAVAARLVGAAASRGPTAARHQDGWNGLSHEAFRIVSRRDY. The tract at residues 1 to 432 is interaction with NFS1; the sequence is MISASRAVAA…IQGGVLAGDV (432 aa). ADP is bound by residues T63 and N64. The interval 63-431 is nucleotide-binding domain (NBD); the sequence is TNSCVAVMEG…AIQGGVLAGD (369 aa). K76 carries the N6-acetyllysine modification. T87 bears the Phosphothreonine mark. N6-acetyllysine; alternate occurs at positions 135 and 138. Residues K135 and K138 each carry the N6-succinyllysine; alternate modification. At K143 the chain carries N6-acetyllysine. At K206 the chain carries N6-acetyllysine; alternate. An N6-succinyllysine; alternate modification is found at K206. K206 carries the N6-malonyllysine; alternate modification. An N6-acetyllysine mark is found at K234 and K288. K300 is modified (N6-acetyllysine; alternate). K300 is modified (N6-succinyllysine; alternate). Positions 313, 316, and 320 each coordinate ADP. At K368 the chain carries N6-succinyllysine. Residues G388 and R391 each contribute to the ADP site. The residue at position 394 (K394) is an N6-succinyllysine. S408 carries the post-translational modification Phosphoserine. The segment at 432–441 is interdomain linker; it reads VTDVLLLDVT. The interval 432–679 is interaction with FXN and ISCU; sequence VTDVLLLDVT…QKEDQKEEKQ (248 aa). The interval 442–679 is substrate-binding domain (SBD); it reads PLSLGIETLG…QKEDQKEEKQ (238 aa). Residue R513 is modified to Omega-N-methylarginine. An N6-acetyllysine; alternate mark is found at K567 and K600. Residues K567 and K600 each carry the N6-succinyllysine; alternate modification. K610 is subject to N6-succinyllysine. Residue K612 is modified to N6-acetyllysine. K646 carries the N6-acetyllysine; alternate modification. K646 is modified (N6-succinyllysine; alternate). The tract at residues 656 to 679 is disordered; it reads ASEREGSGSSGTGEQKEDQKEEKQ. Over residues 669–679 the composition is skewed to basic and acidic residues; that stretch reads EQKEDQKEEKQ.

The protein belongs to the heat shock protein 70 family. Interacts strongly with the intermediate form of FXN and weakly with its mature form. Interacts with HSCB. Associates with the mitochondrial contact site and cristae organizing system (MICOS) complex, composed of at least MICOS10/MIC10, CHCHD3/MIC19, CHCHD6/MIC25, APOOL/MIC27, IMMT/MIC60, APOO/MIC23/MIC26 and QIL1/MIC13. This complex was also known under the names MINOS or MitOS complex. The MICOS complex associates with mitochondrial outer membrane proteins SAMM50, MTX1, MTX2 and DNAJC11, mitochondrial inner membrane protein TMEM11 and with HSPA9. Interacts with DNLZ, the interaction is required to prevent self-aggregation. Interacts with TESPA1. Interacts with PDPN. Interacts with NFU1, NFS1 and ISCU. Interacts with TP53; the interaction promotes TP53 degradation. Interacts (via SBD domain) with UBXN2A; the interaction with UBXN2A inhibits HSPA9/MOT-2 interaction with and degradation of TP53, thereby promotes TP53 translocation to the nucleus. Interacts with ITPR1 AND VDAC1; this interaction couples ITPR1 to VDAC1. Component of the TIM23 mitochondrial inner membrane pre-sequence translocase complex.

The protein localises to the mitochondrion. The protein resides in the nucleus. It is found in the nucleolus. It localises to the cytoplasm. Its subcellular location is the mitochondrion matrix. It carries out the reaction ATP + H2O = ADP + phosphate + H(+). Its activity is regulated as follows. The chaperone activity is regulated by ATP-induced allosteric coupling of the nucleotide-binding (NBD) and substrate-binding (SBD) domains. ATP binding in the nucleotide-binding pocket (NBP) leads to a conformational change in the NBD, which is transferred through the interdomain linker (IDL) to the substrate-binding domain (SBD). This elicits a reduced substrate affinity and a faster substrate exchange rate. Upon hydrolysis of ATP to ADP, the protein undergoes a conformational change that increases its affinity for substrate proteins. It cycles through repeated phases of ATP hydrolysis and nucleotide exchange, facilitating repeated cycles of substrate binding and release. Functions in collaboration with co-chaperones. Functions with the co-chaperone, DNLZ, to maintain solubility and regulate ATP hydrolysis. Nucleotide exchange factors, GRPEL1 and GRPEL2, accelerate nucleotide exchange. Functionally, mitochondrial chaperone that plays a key role in mitochondrial protein import, folding, and assembly. Plays an essential role in the protein quality control system, the correct folding of proteins, the re-folding of misfolded proteins, and the targeting of proteins for subsequent degradation. These processes are achieved through cycles of ATP binding, ATP hydrolysis, and ADP release, mediated by co-chaperones. In mitochondria, it associates with the TIM (translocase of the inner membrane) protein complex to assist in the import and folding of mitochondrial proteins. Plays an important role in mitochondrial iron-sulfur cluster (ISC) biogenesis, interacts with and stabilizes ISC cluster assembly proteins FXN, NFU1, NFS1 and ISCU. Regulates erythropoiesis via stabilization of ISC assembly. Regulates mitochondrial calcium-dependent apoptosis by coupling two calcium channels, ITPR1 and VDAC1, at the mitochondria-associated endoplasmic reticulum (ER) membrane to facilitate calcium transport from the ER lumen to the mitochondria intermembrane space, providing calcium for the downstream calcium channel MCU, which releases it into the mitochondrial matrix. Although primarily located in the mitochondria, it is also found in other cellular compartments. In the cytosol, it associates with proteins involved in signaling, apoptosis, or senescence. It may play a role in cell cycle regulation via its interaction with and promotion of degradation of TP53. May play a role in the control of cell proliferation and cellular aging. Protects against reactive oxygen species (ROS). Extracellular HSPA9 plays a cytoprotective role by preventing cell lysis following immune attack by the membrane attack complex by disrupting formation of the complex. The chain is Stress-70 protein, mitochondrial from Pongo abelii (Sumatran orangutan).